Consider the following 50-residue polypeptide: Conotoxin Bu13 (50 aa).

A signal peptide is located at residue A1. A propeptide spanning residues 2-24 (EDSRGTQLHRALRKTTKLSLSIR) is cleaved from the precursor. 3 disulfide bridges follow: C25–C40, C32–C44, and C39–C49.

The protein belongs to the conotoxin O1 superfamily. In terms of tissue distribution, expressed by the venom duct.

The protein localises to the secreted. This is Conotoxin Bu13 from Conus bullatus (Bubble cone).